A 256-amino-acid polypeptide reads, in one-letter code: MYSTSNRRGRSQTQRGSHVRRTGVKRSYGAARGDDRRRPNVVSKTQVEPRMTIQRVQENQFGPEFVLSQNSALSTFVTYPSYVKTVPNRTRTYIKLKRVRFKGTLKIERGQGDTIMDGPSSNIEGVFSMVIVVDRKPHVSQSGRLHTFDELFGARIHCHGNLSVVPALKDRYYIRHVTKRVVSLEKDTLLIDLHGTTQLSNKRYNCWASFSDLERDSCNGVYGNITKNALLVYYCWLSDAQSKASTYVSFELDYLG.

Residues Met1–Gly16 show a composition bias toward polar residues. Residues Met1 to Gln46 are disordered. Residues Arg21–Val42 carry the Bipartite nuclear localization signal motif. A Nuclear localization signal motif is present at residues Ser81 to Leu96. The interaction with Arabidopsis thaliana NSI protein stretch occupies residues Glu150 to Asp187. The Nuclear export signal signature appears at Val177–Gln198.

This sequence belongs to the begomovirus nuclear shuttle protein family. Binds to single-stranded and double-stranded viral DNA. Interacts with the host nuclear shuttle interacting (NSI) protein. This interaction may allow NSP to recruit NSI monomers to the viral genome and thus regulate nuclear export of viral genome by NSP.

The protein resides in the host nucleus. Its subcellular location is the host cytoplasm. It is found in the host cell membrane. Functionally, binds to the genomic viral ssDNA, shuttles it into and out of the cell nucleus. Begomoviruses use 2 proteins to transport their DNA from cell to cell. The nuclear shuttle protein (NSP) shuttles it between nucleus and cytoplasm and the movement protein (MP) probably transports the DNA-NSP complex to the cell periphery and facilitates movement across the cell wall. The protein is Nuclear shuttle protein of Squash leaf curl virus (SLCV).